A 385-amino-acid chain; its full sequence is Glucans biosynthesis protein C (385 aa).

The next 10 membrane-spanning stretches (helical) occupy residues 17–37 (AWLMLLGIPFHISLIYSSHTW), 60–80 (MQVFFVISGYFSYMLFLRYPL), 91–111 (VGIPMLTAIPLLTLPQFIMLQ), 137–157 (ISHLWFLLVLVVMTTLCVWIF), 173–193 (KFSMVKLSVIFLCLGIGYAVI), 212–232 (FIVMQTLFYLPFFILGALAFI), 239–259 (LFTTPSRGCTFAAALAFVAYL), 274–294 (TESVITMVLGLWMVNVVFSFG), 311–331 (ASLFIYLVHHPLTLFFGAYIT), and 338–358 (WLGFLCGLIFVVGIAIILYEI).

It belongs to the acyltransferase 3 family. OpgC subfamily.

It is found in the cell membrane. The protein operates within glycan metabolism; osmoregulated periplasmic glucan (OPG) biosynthesis. Its function is as follows. Necessary for the succinyl substitution of periplasmic glucans. Could catalyze the transfer of succinyl residues from the cytoplasmic side of the membrane to the nascent glucan backbones on the periplasmic side of the membrane. The sequence is that of Glucans biosynthesis protein C from Escherichia coli O45:K1 (strain S88 / ExPEC).